The following is a 563-amino-acid chain: MAEKFKVESPHVRYLKDVIEADYNYDTTQVYEEKGVTKVKPCSTKFTFHTERKVPKLGVMLVGWGGNNGTTVTAAVLANRLGLSWMTKTGKKVANYYGSLFQSSTACLGSGPAGDVFVPFRDLLPMVHPNDIVFDGWDISSLNLADAMFRAEVLDWQIQEQLRPYMEKMKPRPSIYIPDFIAANQEDRADHTIHGTKAEQVQKIREDIQDFKRTSDVDKVIVLWTANTERFCDIIPGVNDTADNLLKAIENGLEVSPSTMFAVASILEGCAYINGSPQNTFVPGAIELAVQNNVFIGGDDFKSGQTKIKSVLMDFLVSAGLKPVSIVSYNHLGNNDGKNLSAPQQFRSKEISKSNVVDDMVQSNPILYGPNEKPDHCVVIKYVPYVGDSKRAMDEYTSEIMMGGANTIVLHNTCEDSLLASPIILDLVLLTELCQRITFRTETDQEFQTFHSVLSILSFLCKAPLVPAGTPVINAFFRQRNCIENILRACLGLSPQNHMMLEHKMQRSFVSLKRPSTVCNPQPISSKKGNNANGFHLPGISKGLSQSNGLGKNVINSDIEIEN.

The protein belongs to the myo-inositol 1-phosphate synthase family. NAD(+) is required as a cofactor.

It localises to the cytoplasm. It carries out the reaction D-glucose 6-phosphate = 1D-myo-inositol 3-phosphate. It functions in the pathway polyol metabolism; myo-inositol biosynthesis; myo-inositol from D-glucose 6-phosphate: step 1/2. In terms of biological role, key enzyme in myo-inositol biosynthesis pathway that catalyzes the conversion of glucose 6-phosphate to 1-myo-inositol 1-phosphate in a NAD-dependent manner. Rate-limiting enzyme in the synthesis of all inositol-containing compounds. This chain is Inositol-3-phosphate synthase 1-A (isyna1-a), found in Xenopus laevis (African clawed frog).